Consider the following 201-residue polypeptide: Small ribosomal subunit protein uS4c (201 aa).

The region spanning 89–157 (MRLDNILFRL…VQNYIASSDP (69 aa)) is the S4 RNA-binding domain.

It belongs to the universal ribosomal protein uS4 family. Part of the 30S ribosomal subunit. Contacts protein S5. The interaction surface between S4 and S5 is involved in control of translational fidelity.

The protein resides in the plastid. Its subcellular location is the chloroplast. One of the primary rRNA binding proteins, it binds directly to 16S rRNA where it nucleates assembly of the body of the 30S subunit. Functionally, with S5 and S12 plays an important role in translational accuracy. The sequence is that of Small ribosomal subunit protein uS4c (rps4) from Triticum aestivum (Wheat).